Here is a 323-residue protein sequence, read N- to C-terminus: Acetyl esterase (323 aa).

Positions H91–G93 match the Involved in the stabilization of the negatively charged intermediate by the formation of the oxyanion hole motif. Active-site residues include S165, D262, and H292.

The protein belongs to the 'GDXG' lipolytic enzyme family. Homodimer. Interacts with MalT and MelA.

It localises to the cytoplasm. Displays esterase activity towards short chain fatty esters (acyl chain length of up to 8 carbons). Able to hydrolyze triacetylglycerol (triacetin) and tributyrylglycerol (tributyrin), but not trioleylglycerol (triolein) or cholesterol oleate. Negatively regulates MalT activity by antagonizing maltotriose binding. Inhibits MelA galactosidase activity. The sequence is that of Acetyl esterase from Salmonella paratyphi B (strain ATCC BAA-1250 / SPB7).